The following is a 148-amino-acid chain: Nucleoside diphosphate kinase 1 (148 aa).

ATP is bound by residues K9, F57, R85, T91, R102, and N112. Catalysis depends on H115, which acts as the Pros-phosphohistidine intermediate.

It belongs to the NDK family. Mg(2+) is required as a cofactor.

It catalyses the reaction a 2'-deoxyribonucleoside 5'-diphosphate + ATP = a 2'-deoxyribonucleoside 5'-triphosphate + ADP. The catalysed reaction is a ribonucleoside 5'-diphosphate + ATP = a ribonucleoside 5'-triphosphate + ADP. In terms of biological role, major role in the synthesis of nucleoside triphosphates other than ATP. The ATP gamma phosphate is transferred to the NDP beta phosphate via a ping-pong mechanism, using a phosphorylated active-site intermediate. The sequence is that of Nucleoside diphosphate kinase 1 from Nicotiana tabacum (Common tobacco).